The primary structure comprises 509 residues: Methylthioalkylmalate synthase 1-1, chloroplastic (509 aa).

Residues 1–55 (MSFSPTYSIVMASPLLTSSQMIPTTGSTVGFRSILPFGSLRLTRPYKKTSLFISY) constitute a chloroplast transit peptide. In terms of domain architecture, Pyruvate carboxyltransferase spans 91–365 (VRVYDTTLRD…YTRIDTRQIM (275 aa)). Mn(2+) is bound by residues aspartate 100, histidine 298, and histidine 300.

This sequence belongs to the alpha-IPM synthase/homocitrate synthase family. In terms of assembly, monomer. The cofactor is Mn(2+). Co(2+) is required as a cofactor.

It is found in the plastid. The protein localises to the chloroplast. The enzyme catalyses 4-methylsulfanyl-2-oxobutanoate + acetyl-CoA + H2O = 2-(2-methylsulfanyl)ethylmalate + CoA + H(+). The protein operates within secondary metabolite biosynthesis. Inhibited by EDTA, Cu(2+) and Zn(2+). Determines the side chain length of aliphatic glucosinolate structures. Involved in the biosynthesis of glucosinolate derivative natural products such as 6-(methylsulfinyl)hexylisothiocyanate (6-MSITC), a compound found in wasabi with diverse health-promoting properties. Catalyzes the conversion of 4-methylsulfanyl-2-oxobutanoate (4-MTOB) into 2-(2-methylsulfanyl)ethylmalate (2-(2-MT)EM). The protein is Methylthioalkylmalate synthase 1-1, chloroplastic of Eutrema japonicum (Wasabi plant).